The primary structure comprises 283 residues: Pantothenate synthetase (283 aa).

30–37 provides a ligand contact to ATP; sequence MGNLHDGH. Residue His-37 is the Proton donor of the active site. Gln-61 contributes to the (R)-pantoate binding site. Position 61 (Gln-61) interacts with beta-alanine. Residue 149–152 participates in ATP binding; that stretch reads GEKD. Gln-155 contacts (R)-pantoate. An ATP-binding site is contributed by 186–189; the sequence is LSSR.

Belongs to the pantothenate synthetase family. Homodimer.

The protein resides in the cytoplasm. The catalysed reaction is (R)-pantoate + beta-alanine + ATP = (R)-pantothenate + AMP + diphosphate + H(+). It participates in cofactor biosynthesis; (R)-pantothenate biosynthesis; (R)-pantothenate from (R)-pantoate and beta-alanine: step 1/1. Its function is as follows. Catalyzes the condensation of pantoate with beta-alanine in an ATP-dependent reaction via a pantoyl-adenylate intermediate. In Escherichia coli O17:K52:H18 (strain UMN026 / ExPEC), this protein is Pantothenate synthetase.